A 196-amino-acid polypeptide reads, in one-letter code: Holliday junction branch migration complex subunit RuvA (196 aa).

The interval 1 to 63 is domain I; the sequence is MINKIYGKVI…ENELKLFGFL (63 aa). The segment at 64 to 139 is domain II; the sequence is NSDERETFKS…KLLINNELES (76 aa). Serine 139 is a region of interest (flexible linker). The domain III stretch occupies residues 139–196; that stretch reads SSLFRFKELEESIVSMGFDRKIVNSKLKEAFNLVEFSNLKDSEKEQFLFKEVLKRMSN.

Belongs to the RuvA family. As to quaternary structure, homotetramer. Forms an RuvA(8)-RuvB(12)-Holliday junction (HJ) complex. HJ DNA is sandwiched between 2 RuvA tetramers; dsDNA enters through RuvA and exits via RuvB. An RuvB hexamer assembles on each DNA strand where it exits the tetramer. Each RuvB hexamer is contacted by two RuvA subunits (via domain III) on 2 adjacent RuvB subunits; this complex drives branch migration. In the full resolvosome a probable DNA-RuvA(4)-RuvB(12)-RuvC(2) complex forms which resolves the HJ.

Its subcellular location is the cytoplasm. In terms of biological role, the RuvA-RuvB-RuvC complex processes Holliday junction (HJ) DNA during genetic recombination and DNA repair, while the RuvA-RuvB complex plays an important role in the rescue of blocked DNA replication forks via replication fork reversal (RFR). RuvA specifically binds to HJ cruciform DNA, conferring on it an open structure. The RuvB hexamer acts as an ATP-dependent pump, pulling dsDNA into and through the RuvAB complex. HJ branch migration allows RuvC to scan DNA until it finds its consensus sequence, where it cleaves and resolves the cruciform DNA. The chain is Holliday junction branch migration complex subunit RuvA from Borreliella afzelii (strain PKo) (Borrelia afzelii).